The sequence spans 258 residues: NAD kinase (258 aa).

Asp45 acts as the Proton acceptor in catalysis. Residues 45-46, 117-118, Asp147, Ala155, 158-163, and Ala182 each bind NAD(+); these read DG, NE, and TAYNYS.

The protein belongs to the NAD kinase family. Requires a divalent metal cation as cofactor.

Its subcellular location is the cytoplasm. It carries out the reaction NAD(+) + ATP = ADP + NADP(+) + H(+). Its function is as follows. Involved in the regulation of the intracellular balance of NAD and NADP, and is a key enzyme in the biosynthesis of NADP. Catalyzes specifically the phosphorylation on 2'-hydroxyl of the adenosine moiety of NAD to yield NADP. This Xanthomonas campestris pv. campestris (strain 8004) protein is NAD kinase.